Consider the following 84-residue polypeptide: Hepcidin (84 aa).

An N-terminal signal peptide occupies residues methionine 1 to glycine 24. A propeptide spanning residues serine 25–glutamine 54 is cleaved from the precursor. 4 cysteine pairs are disulfide-bonded: cysteine 66–cysteine 82, cysteine 69–cysteine 72, cysteine 70–cysteine 78, and cysteine 73–cysteine 81.

It belongs to the hepcidin family. In terms of assembly, interacts with SLC40A1; this interaction promotes SLC40A1 rapid ubiquitination. In terms of tissue distribution, highest expression in liver and to a lesser extent in heart and brain. Low levels in lung, tonsils, salivary gland, trachea, prostate gland, adrenal gland and thyroid gland. Secreted into the urine and blood. Expressed by hepatocytes.

It localises to the secreted. Its function is as follows. Liver-produced hormone that constitutes the main circulating regulator of iron absorption and distribution across tissues. Acts by promoting endocytosis and degradation of ferroportin/SLC40A1, leading to the retention of iron in iron-exporting cells and decreased flow of iron into plasma. Controls the major flows of iron into plasma: absorption of dietary iron in the intestine, recycling of iron by macrophages, which phagocytose old erythrocytes and other cells, and mobilization of stored iron from hepatocytes. In terms of biological role, has strong antimicrobial activity against E.coli ML35P N.cinerea and weaker against S.epidermidis, S.aureus and group b streptococcus bacteria. Active against the fungus C.albicans. No activity against P.aeruginosa. In Homo sapiens (Human), this protein is Hepcidin.